A 1066-amino-acid polypeptide reads, in one-letter code: Isoleucine--tRNA ligase (1066 aa).

The short motif at 47-57 (PYTTGYIHLGT) is the 'HIGH' region element. The 'KMSKS' region motif lies at 594-598 (KMSKS). Position 597 (lysine 597) interacts with ATP.

It belongs to the class-I aminoacyl-tRNA synthetase family. IleS type 2 subfamily. Monomer. Zn(2+) serves as cofactor.

The protein resides in the cytoplasm. It carries out the reaction tRNA(Ile) + L-isoleucine + ATP = L-isoleucyl-tRNA(Ile) + AMP + diphosphate. In terms of biological role, catalyzes the attachment of isoleucine to tRNA(Ile). As IleRS can inadvertently accommodate and process structurally similar amino acids such as valine, to avoid such errors it has two additional distinct tRNA(Ile)-dependent editing activities. One activity is designated as 'pretransfer' editing and involves the hydrolysis of activated Val-AMP. The other activity is designated 'posttransfer' editing and involves deacylation of mischarged Val-tRNA(Ile). The sequence is that of Isoleucine--tRNA ligase from Methanocorpusculum labreanum (strain ATCC 43576 / DSM 4855 / Z).